The chain runs to 89 residues: Sec translocon accessory complex subunit YrbF (89 aa).

The helical transmembrane segment at Gly4–Ile24 threads the bilayer.

It belongs to the YajC family. Part of the SecDF-YidC-YajC translocase complex. The SecDF-YidC-YajC translocase forms a supercomplex with SecYEG, called the holo-translocon (HTL).

The protein localises to the cell membrane. The SecYEG-SecDF-YajC-YidC holo-translocon (HTL) protein secretase/insertase is a supercomplex required for protein secretion, insertion of proteins into membranes, and assembly of membrane protein complexes. While the SecYEG complex is essential for assembly of a number of proteins and complexes, the SecDF-YajC-YidC subcomplex facilitates these functions. The polypeptide is Sec translocon accessory complex subunit YrbF (yrbF) (Bacillus subtilis (strain 168)).